Reading from the N-terminus, the 197-residue chain is Shikimate kinase (197 aa).

26 to 31 (GSGKSR) is a binding site for ATP. Mg(2+) is bound at residue Ser-30. 3 residues coordinate substrate: Asp-48, Arg-72, and Gly-94. Residue Arg-132 participates in ATP binding. Arg-150 lines the substrate pocket.

This sequence belongs to the shikimate kinase family. Monomer. Mg(2+) is required as a cofactor.

The protein resides in the cytoplasm. The enzyme catalyses shikimate + ATP = 3-phosphoshikimate + ADP + H(+). The protein operates within metabolic intermediate biosynthesis; chorismate biosynthesis; chorismate from D-erythrose 4-phosphate and phosphoenolpyruvate: step 5/7. Its function is as follows. Catalyzes the specific phosphorylation of the 3-hydroxyl group of shikimic acid using ATP as a cosubstrate. The polypeptide is Shikimate kinase (Prochlorococcus marinus (strain MIT 9211)).